The following is a 167-amino-acid chain: Transcription initiation factor TFIID subunit 10 (167 aa).

Disordered stretches follow at residues 1–56 and 119–139; these read MASD…EESE and TTNIQHSSGHSSSKDKKNPKD. Residues 41 to 56 show a composition bias toward acidic residues; it reads EQPDVEEVPLTTEESE. A compositionally biased stretch (basic and acidic residues) spans 130 to 139; it reads SSKDKKNPKD.

Belongs to the TAF10 family. As to quaternary structure, belongs to the TFIID complex which is composed of TATA binding protein (Tbp) and a number of TBP-associated factors (TAFs). Also a member of the histone acetylase (HAT) complex. At embryonic stage 9, highest expression is detected within the ectoderm, ventral chord, and anterior foregut primordium. Later in development preferential expression is in the foregut, proventriculus, and central nervous system. Coexpressed with Taf10b in the lateral epidermis and anal plate.

The protein resides in the cytoplasm. It is found in the nucleus. Functionally, TFIID is a multimeric protein complex that plays a central role in mediating promoter responses to various activators and repressors. In Drosophila melanogaster (Fruit fly), this protein is Transcription initiation factor TFIID subunit 10.